The primary structure comprises 70 residues: Protein SlyX homolog (70 aa).

This sequence belongs to the SlyX family.

The chain is Protein SlyX homolog from Shewanella sp. (strain MR-7).